Reading from the N-terminus, the 3344-residue chain is Genome polyprotein (3344 aa).

Positions 408–547 (IVGNSKINYI…RSVYAKMDQY (140 aa)) constitute a Peptidase S30 domain. Catalysis depends on for P1 proteinase activity residues His-456, Asp-465, and Ser-499. An Involved in interaction with stylet and aphid transmission motif is present at residues 598–601 (KITC). An Involved in virions binding and aphid transmission motif is present at residues 856-858 (PTK). In terms of domain architecture, Peptidase C6 spans 882–1004 (MYIAKKGYCY…DSEMKHYIVG (123 aa)). Catalysis depends on for helper component proteinase activity residues Cys-890 and His-963. One can recognise a Helicase ATP-binding domain in the interval 1473 to 1625 (EIAHSPEREF…TQFPTKIVTE (153 aa)). 1486 to 1493 (GAVGSGKS) contributes to the ATP binding site. The DECH box motif lies at 1575-1578 (DECH). Residues 1644-1803 (DVTAFADNIL…GLPVMTHNVG (160 aa)) enclose the Helicase C-terminal domain. The Nuclear localization signal signature appears at 2134–2141 (KKGNKKGK). Tyr-2156 carries the O-(5'-phospho-RNA)-tyrosine modification. The region spanning 2283 to 2499 (GKSLCQGMRN…LSWGALKVWE (217 aa)) is the Peptidase C4 domain. Residues His-2327, Asp-2362, and Cys-2431 each act as for nuclear inclusion protein A activity in the active site. A RdRp catalytic domain is found at 2761 to 2885 (WVYCDADGSQ…AIHPDHEHVL (125 aa)). The segment covering 3059–3093 (KNEAVDAGLNEKLKEKEKQKEKEKEKQKEKEKDGA) has biased composition (basic and acidic residues). Residues 3059-3116 (KNEAVDAGLNEKLKEKEKQKEKEKEKQKEKEKDGASDGNDVSTSTKTGERDRDVNVGT) are disordered.

This sequence belongs to the potyviridae genome polyprotein family. Interacts with host eIF4E protein (via cap-binding region); this interaction mediates the translation of the VPg-viral RNA conjugates. Part of a complex that comprises VPg, RNA, host EIF4E and EIF4G; this interaction mediates the translation of the VPg-viral RNA conjugates. Post-translationally, VPg is uridylylated by the polymerase and is covalently attached to the 5'-end of the genomic RNA. This uridylylated form acts as a nucleotide-peptide primer for the polymerase. Potyviral RNA is expressed as two polyproteins which undergo post-translational proteolytic processing. Genome polyprotein is processed by NIa-pro, P1 and HC-pro proteinases resulting in the production of at least ten individual proteins. P3N-PIPO polyprotein is cleaved by P1 and HC-pro proteinases resulting in the production of three individual proteins. The P1 proteinase and the HC-pro cleave only their respective C-termini autocatalytically. 6K1 is essential for proper proteolytic separation of P3 from CI.

It localises to the host cytoplasmic vesicle. Its subcellular location is the host nucleus. It is found in the virion. The catalysed reaction is RNA(n) + a ribonucleoside 5'-triphosphate = RNA(n+1) + diphosphate. It catalyses the reaction Hydrolyzes glutaminyl bonds, and activity is further restricted by preferences for the amino acids in P6 - P1' that vary with the species of potyvirus, e.g. Glu-Xaa-Xaa-Tyr-Xaa-Gln-|-(Ser or Gly) for the enzyme from tobacco etch virus. The natural substrate is the viral polyprotein, but other proteins and oligopeptides containing the appropriate consensus sequence are also cleaved.. The enzyme catalyses Hydrolyzes a Gly-|-Gly bond at its own C-terminus, commonly in the sequence -Tyr-Xaa-Val-Gly-|-Gly, in the processing of the potyviral polyprotein.. In terms of biological role, required for aphid transmission and also has proteolytic activity. Only cleaves a Gly-Gly dipeptide at its own C-terminus. Interacts with virions and aphid stylets. Acts as a suppressor of RNA-mediated gene silencing, also known as post-transcriptional gene silencing (PTGS), a mechanism of plant viral defense that limits the accumulation of viral RNAs. May have RNA-binding activity. Functionally, has helicase activity. It may be involved in replication. Indispensable for virus replication. Its function is as follows. Mediates the cap-independent, EIF4E-dependent translation of viral genomic RNAs. Binds to the cap-binding site of host EIF4E and thus interferes with the host EIF4E-dependent mRNA export and translation. VPg-RNA directly binds EIF4E and is a template for transcription. Also forms trimeric complexes with EIF4E-EIF4G, which are templates for translation. In terms of biological role, has RNA-binding and proteolytic activities. Functionally, an RNA-dependent RNA polymerase that plays an essential role in the virus replication. Involved in aphid transmission, cell-to-cell and systemis movement, encapsidation of the viral RNA and in the regulation of viral RNA amplification. This Carica papaya (Papaya) protein is Genome polyprotein.